Consider the following 544-residue polypeptide: Propane 2-monooxygenase, hydroxylase component large subunit (544 aa).

Residues Glu97, Glu127, His130, Glu192, Glu226, and His229 each contribute to the Fe cation site.

The protein belongs to the TmoA/XamoA family. In terms of assembly, the propane 2-monooxygenase multicomponent enzyme system is composed of an electron transfer component and a monooxygenase component interacting with the effector protein PrmD. The electron transfer component is composed of a reductase (PrmB), and the monooxygenase component is formed by a large subunit (PrmA) and a small subunit (PrmC). Probably requires the presence of the chaperonin-like protein PrmG to ensure a productive folding, resulting of a soluble PrmA, which leads to the active form of PrmABCD. Requires Fe(2+) as cofactor.

It carries out the reaction propane + NADH + O2 + H(+) = propan-2-ol + NAD(+) + H2O. Component of the propane 2-monooxygenase multicomponent enzyme system which is involved in the degradation of propane via the O2-dependent hydroxylation of propane. Also able to catalyze the oxidation the water contaminant N-nitrosodimethylamine (NDMA). This is Propane 2-monooxygenase, hydroxylase component large subunit from Rhodococcus jostii (strain RHA1).